A 671-amino-acid chain; its full sequence is UvrABC system protein C (671 aa).

Residues Val-16–Val-95 enclose the GIY-YIG domain. Positions Asp-208–Ala-243 constitute a UVR domain. Residues Ser-645 to Thr-671 form a disordered region.

The protein belongs to the UvrC family. As to quaternary structure, interacts with UvrB in an incision complex.

The protein resides in the cytoplasm. The UvrABC repair system catalyzes the recognition and processing of DNA lesions. UvrC both incises the 5' and 3' sides of the lesion. The N-terminal half is responsible for the 3' incision and the C-terminal half is responsible for the 5' incision. This is UvrABC system protein C from Mycobacteroides abscessus (strain ATCC 19977 / DSM 44196 / CCUG 20993 / CIP 104536 / JCM 13569 / NCTC 13031 / TMC 1543 / L948) (Mycobacterium abscessus).